Consider the following 258-residue polypeptide: Transcription factor RSL3 (258 aa).

Residues 98–105 (RKLLDVEN) carry the D-box motif. A disordered region spans residues 119-178 (ELAKSKKKQRVSSESNTVDESNTNWVDGQSLSNSSDDEKASVTSVKGKTRATKGTATDPQ). Residues 130–152 (SSESNTVDESNTNWVDGQSLSNS) are compositionally biased toward polar residues. The interval 173 to 186 (TATDPQSLYARKRR) is basic motif. The bHLH domain maps to 173–222 (TATDPQSLYARKRREKINERLKTLQNLVPNGTKVDISTMLEEAVHYVKFL). The tract at residues 187-222 (EKINERLKTLQNLVPNGTKVDISTMLEEAVHYVKFL) is helix-loop-helix motif.

In terms of assembly, homodimer. Post-translationally, ubiquitinated. Ubiquitination leads to its subsequent degradation by the 26S proteasome. As to expression, expressed constitutively in roots, leaves, and flowers. Expressed in root epidermal hair cells.

Its subcellular location is the nucleus. Transcription factor involved in the regulation of root hair elongation. Is sufficient to promote postmitotic cell growth in root-hair cells and is a direct transcriptional target of RHD6 and RSL1. Involved in the regulation of root hair elongation in response to low phosphate. Controls root hair cell growth by regulating the expression of genes encoding proteins involved in cell signaling, cell wall modification and secretion. This chain is Transcription factor RSL3, found in Arabidopsis thaliana (Mouse-ear cress).